Consider the following 632-residue polypeptide: tRNA uridine 5-carboxymethylaminomethyl modification enzyme MnmG (632 aa).

Residue 15–20 (GAGHAG) participates in FAD binding. Residues 205–231 (PRVDGNTIDYSKTQEEPGDKEPRHFSY) are disordered. Over residues 216-228 (KTQEEPGDKEPRH) the composition is skewed to basic and acidic residues. 276-290 (GPRYCPSIEDKVVRF) serves as a coordination point for NAD(+).

It belongs to the MnmG family. In terms of assembly, homodimer. Heterotetramer of two MnmE and two MnmG subunits. The cofactor is FAD.

It localises to the cytoplasm. In terms of biological role, NAD-binding protein involved in the addition of a carboxymethylaminomethyl (cmnm) group at the wobble position (U34) of certain tRNAs, forming tRNA-cmnm(5)s(2)U34. The sequence is that of tRNA uridine 5-carboxymethylaminomethyl modification enzyme MnmG from Lactobacillus johnsonii (strain CNCM I-12250 / La1 / NCC 533).